The primary structure comprises 819 residues: Leucine--tRNA ligase (819 aa).

The short motif at 40–51 (PYPSGAGLHVGH) is the 'HIGH' region element. The 'KMSKS' region signature appears at 600-604 (KMSKS). An ATP-binding site is contributed by lysine 603.

This sequence belongs to the class-I aminoacyl-tRNA synthetase family.

The protein localises to the cytoplasm. The enzyme catalyses tRNA(Leu) + L-leucine + ATP = L-leucyl-tRNA(Leu) + AMP + diphosphate. The protein is Leucine--tRNA ligase of Chlamydia trachomatis serovar D (strain ATCC VR-885 / DSM 19411 / UW-3/Cx).